The following is a 313-amino-acid chain: Protein-methionine-sulfoxide reductase catalytic subunit MsrP (313 aa).

The segment at residues 1–44 (MARWRPDTAEREATPEALYLRRREFLALGAAGAVGLLLPRGARA) is a signal peptide (tat-type signal). Residues Asn76, 79–80 (YE), Cys134, Thr169, Asn217, Arg222, and 233–235 (GAK) contribute to the Mo-molybdopterin site.

It belongs to the MsrP family. In terms of assembly, heterodimer of a catalytic subunit (MsrP) and a heme-binding subunit (MsrQ). It depends on Mo-molybdopterin as a cofactor. Post-translationally, predicted to be exported by the Tat system. The position of the signal peptide cleavage has not been experimentally proven.

It localises to the periplasm. The enzyme catalyses L-methionyl-[protein] + a quinone + H2O = L-methionyl-(S)-S-oxide-[protein] + a quinol. The catalysed reaction is L-methionyl-[protein] + a quinone + H2O = L-methionyl-(R)-S-oxide-[protein] + a quinol. Functionally, part of the MsrPQ system that repairs oxidized periplasmic proteins containing methionine sulfoxide residues (Met-O), using respiratory chain electrons. Thus protects these proteins from oxidative-stress damage caused by reactive species of oxygen and chlorine generated by the host defense mechanisms. MsrPQ is essential for the maintenance of envelope integrity under bleach stress, rescuing a wide series of structurally unrelated periplasmic proteins from methionine oxidation. The catalytic subunit MsrP is non-stereospecific, being able to reduce both (R-) and (S-) diastereoisomers of methionine sulfoxide. In Anaeromyxobacter dehalogenans (strain 2CP-C), this protein is Protein-methionine-sulfoxide reductase catalytic subunit MsrP.